Consider the following 470-residue polypeptide: Uronate isomerase (470 aa).

This sequence belongs to the metallo-dependent hydrolases superfamily. Uronate isomerase family.

The catalysed reaction is D-glucuronate = D-fructuronate. It carries out the reaction aldehydo-D-galacturonate = keto-D-tagaturonate. It participates in carbohydrate metabolism; pentose and glucuronate interconversion. The protein is Uronate isomerase of Shigella boydii serotype 4 (strain Sb227).